The following is a 312-amino-acid chain: NADH-ubiquinone oxidoreductase chain 1 (312 aa).

8 consecutive transmembrane segments (helical) span residues 3–23 (FILS…SVAF), 77–97 (ISPI…PFFV), 104–124 (LGGL…MVAG), 150–170 (LALI…VYFF), 174–194 (IYVW…TISL), 226–246 (LIFM…CVIF), 250–270 (DVFN…FIWA), and 289–309 (CFLS…ILLF).

It belongs to the complex I subunit 1 family.

Its subcellular location is the mitochondrion inner membrane. The catalysed reaction is a ubiquinone + NADH + 5 H(+)(in) = a ubiquinol + NAD(+) + 4 H(+)(out). Core subunit of the mitochondrial membrane respiratory chain NADH dehydrogenase (Complex I) that is believed to belong to the minimal assembly required for catalysis. Complex I functions in the transfer of electrons from NADH to the respiratory chain. The immediate electron acceptor for the enzyme is believed to be ubiquinone. This Drosophila subobscura (Fruit fly) protein is NADH-ubiquinone oxidoreductase chain 1 (mt:ND1).